We begin with the raw amino-acid sequence, 407 residues long: Keratin, type I cuticular Ha2 (407 aa).

Residues 1 to 55 (MPSVCMPTTYRPASCLSKTYLSSSCQPSNRRPTGCISSSMGTYGLFCEGAFNGNE) are head. The 312-residue stretch at 55 to 366 (EKETMQVLND…GLLESEDSKL (312 aa)) folds into the IF rod domain. Residues 56–90 (KETMQVLNDRLANYLEKVRQLEKENAELEGKIQDV) form a coil 1A region. Residues 91-101 (YQGQVLTMCPD) are linker 1. The segment at 102–202 (YQSYFQTIEE…HEEEVGVLRQ (101 aa)) is coil 1B. Residues 203–218 (QLGDRLNIEVDAAPPV) form a linker 12 region. The tract at residues 219-362 (DLTRMLEEMR…DTYRGLLESE (144 aa)) is coil 2. The interval 363 to 407 (DSKLPCNPCSTPSCQPCAPSPGVSRTVCVPHTVCVPCSPCLQTRY) is tail.

The protein belongs to the intermediate filament family. Cuticle of the hair shaft.

The polypeptide is Keratin, type I cuticular Ha2 (Krt32) (Mus musculus (Mouse)).